The sequence spans 159 residues: NADH-quinone oxidoreductase subunit I (159 aa).

4Fe-4S ferredoxin-type domains are found at residues Arg51–Asp80 and Thr90–Asn119. The [4Fe-4S] cluster site is built by Cys60, Cys63, Cys66, Cys70, Cys99, Cys102, Cys105, and Cys109.

Belongs to the complex I 23 kDa subunit family. NDH-1 is composed of 14 different subunits. Subunits NuoA, H, J, K, L, M, N constitute the membrane sector of the complex. The cofactor is [4Fe-4S] cluster.

It localises to the cell inner membrane. It carries out the reaction a quinone + NADH + 5 H(+)(in) = a quinol + NAD(+) + 4 H(+)(out). NDH-1 shuttles electrons from NADH, via FMN and iron-sulfur (Fe-S) centers, to quinones in the respiratory chain. The immediate electron acceptor for the enzyme in this species is believed to be ubiquinone. Couples the redox reaction to proton translocation (for every two electrons transferred, four hydrogen ions are translocated across the cytoplasmic membrane), and thus conserves the redox energy in a proton gradient. The chain is NADH-quinone oxidoreductase subunit I from Rickettsia prowazekii (strain Madrid E).